The following is a 259-amino-acid chain: Phosphatidylglycerol--prolipoprotein diacylglyceryl transferase (259 aa).

The next 4 membrane-spanning stretches (helical) occupy residues 9–29 (IGPF…VLAV), 47–67 (IDFI…YYVI), 83–103 (IWNG…VLFI), and 109–129 (VLNP…AQAI). Arg131 is an a 1,2-diacyl-sn-glycero-3-phospho-(1'-sn-glycerol) binding site. The next 3 helical transmembrane spans lie at 167-187 (MPTF…ICYL), 194-214 (LLEG…RFVI), and 227-247 (LRVS…FVIL).

The protein belongs to the Lgt family.

Its subcellular location is the cell membrane. The catalysed reaction is L-cysteinyl-[prolipoprotein] + a 1,2-diacyl-sn-glycero-3-phospho-(1'-sn-glycerol) = an S-1,2-diacyl-sn-glyceryl-L-cysteinyl-[prolipoprotein] + sn-glycerol 1-phosphate + H(+). Its pathway is protein modification; lipoprotein biosynthesis (diacylglyceryl transfer). Catalyzes the transfer of the diacylglyceryl group from phosphatidylglycerol to the sulfhydryl group of the N-terminal cysteine of a prolipoprotein, the first step in the formation of mature lipoproteins. This is Phosphatidylglycerol--prolipoprotein diacylglyceryl transferase from Streptococcus uberis (strain ATCC BAA-854 / 0140J).